The chain runs to 53 residues: Kunitz-type trypsin inhibitor alpha chain (53 aa).

The disordered stretch occupies residues 33–53 (GWGLPRRTGDESCPLNVKAVR).

The protein belongs to the protease inhibitor I3 (leguminous Kunitz-type inhibitor) family. Heterodimer of an alpha and a beta chain linked by a disulfide bond.

Inhibits trypsin with a Ki of 0.25 uM. Inhibits the trypsin-like proteases in midguts of larval H.armigera, S.exigua, and P.rapae. This is Kunitz-type trypsin inhibitor alpha chain from Albizia kalkora (Kalkora mimosa).